Consider the following 242-residue polypeptide: Small ribosomal subunit protein uS2 (242 aa).

Belongs to the universal ribosomal protein uS2 family.

This chain is Small ribosomal subunit protein uS2, found in Neisseria gonorrhoeae (strain ATCC 700825 / FA 1090).